An 87-amino-acid chain; its full sequence is Acyl-CoA-binding protein (87 aa).

Ser2 is modified (N-acetylserine). The ACB domain occupies 2-87; the sequence is SQAEFDKAAE…VEDLKKKYGI (86 aa). Lys8 bears the N6-acetyllysine; alternate mark. Residue Lys8 is modified to N6-succinyllysine; alternate. Residue Lys14 coordinates an acyl-CoA. Lys17 bears the N6-succinyllysine mark. Lys19 bears the N6-acetyllysine mark. Phosphotyrosine is present on Tyr29. An acyl-CoA contacts are provided by residues 29–33, Lys55, and Tyr74; that span reads YSHYK. An N6-acetyllysine; alternate modification is found at Lys55. The residue at position 55 (Lys55) is an N6-succinyllysine; alternate. N6-(2-hydroxyisobutyryl)lysine; alternate is present on Lys55. Lys55 bears the N6-malonyllysine; alternate mark. Lys77 carries the N6-acetyllysine; alternate modification. Position 77 is an N6-succinyllysine; alternate (Lys77).

It belongs to the ACBP family. As to quaternary structure, monomer.

Its subcellular location is the endoplasmic reticulum. The protein localises to the golgi apparatus. Functionally, binds medium- and long-chain acyl-CoA esters with very high affinity and may function as an intracellular carrier of acyl-CoA esters. The chain is Acyl-CoA-binding protein (DBI) from Canis lupus familiaris (Dog).